Reading from the N-terminus, the 358-residue chain is Aminomethyltransferase (358 aa).

This sequence belongs to the GcvT family. The glycine cleavage system is composed of four proteins: P, T, L and H.

It catalyses the reaction N(6)-[(R)-S(8)-aminomethyldihydrolipoyl]-L-lysyl-[protein] + (6S)-5,6,7,8-tetrahydrofolate = N(6)-[(R)-dihydrolipoyl]-L-lysyl-[protein] + (6R)-5,10-methylene-5,6,7,8-tetrahydrofolate + NH4(+). In terms of biological role, the glycine cleavage system catalyzes the degradation of glycine. This chain is Aminomethyltransferase, found in Francisella tularensis subsp. holarctica (strain FTNF002-00 / FTA).